Reading from the N-terminus, the 73-residue chain is Large ribosomal subunit protein uL29 (73 aa).

Belongs to the universal ribosomal protein uL29 family.

In Aquifex aeolicus (strain VF5), this protein is Large ribosomal subunit protein uL29 (rpmC).